We begin with the raw amino-acid sequence, 671 residues long: NADH-quinone oxidoreductase subunit G (671 aa).

The region spanning 1 to 78 (MIKLNIDGSE…GMVIHTDTPM (78 aa)) is the 2Fe-2S ferredoxin-type domain. [2Fe-2S] cluster contacts are provided by cysteine 34, cysteine 45, cysteine 48, and cysteine 62. In terms of domain architecture, 4Fe-4S His(Cys)3-ligated-type spans 78–117 (MVKKAREGVMEFLLINHPLDCPICDQGGECDLQDQAFRYG). 8 residues coordinate [4Fe-4S] cluster: histidine 94, cysteine 98, cysteine 101, cysteine 107, cysteine 146, cysteine 149, cysteine 152, and cysteine 196. The 4Fe-4S Mo/W bis-MGD-type domain occupies 215 to 271 (LKHTASIGVHDAEGSNIRIDSRGDEVMRILPRVNEEINEEWLSDKNRFSYDGLKYQR).

It belongs to the complex I 75 kDa subunit family. It depends on [2Fe-2S] cluster as a cofactor. The cofactor is [4Fe-4S] cluster.

The enzyme catalyses a quinone + NADH + 5 H(+)(in) = a quinol + NAD(+) + 4 H(+)(out). NDH-1 shuttles electrons from NADH, via FMN and iron-sulfur (Fe-S) centers, to quinones in the respiratory chain. Couples the redox reaction to proton translocation (for every two electrons transferred, four hydrogen ions are translocated across the cytoplasmic membrane), and thus conserves the redox energy in a proton gradient. In Rickettsia felis (strain ATCC VR-1525 / URRWXCal2) (Rickettsia azadi), this protein is NADH-quinone oxidoreductase subunit G (nuoG).